The following is a 407-amino-acid chain: SERPINE1 mRNA-binding protein 1 (407 aa).

A Phosphoserine modification is found at S25. Positions 33 to 227 (AAENKKKEAG…GSGSHNWGTV (195 aa)) are disordered. The span at 51–68 (AKSAAQAAAQTNSNAAGK) shows a compositional bias: low complexity. N6-acetyllysine; alternate is present on K52. K52 is covalently cross-linked (Glycyl lysine isopeptide (Lys-Gly) (interchain with G-Cter in SUMO1); alternate). K68 carries the N6-acetyllysine modification. Basic and acidic residues-rich tracts occupy residues 70 to 80 (LRKESQKDRKN), 89 to 114 (VDKK…RRPD), and 122 to 162 (KIID…DRPI). Residue K102 forms a Glycyl lysine isopeptide (Lys-Gly) (interchain with G-Cter in SUMO1); alternate linkage. K102 is covalently cross-linked (Glycyl lysine isopeptide (Lys-Gly) (interchain with G-Cter in SUMO2)). Residue K102 forms a Glycyl lysine isopeptide (Lys-Gly) (interchain with G-Cter in SUMO2); alternate linkage. An N6-acetyllysine mark is found at K122 and K140. Over residues 164 to 182 (GRGGLGRGRGGRGRGMGRG) the composition is skewed to gly residues. R165 and R188 each carry omega-N-methylarginine. Basic and acidic residues predominate over residues 183–199 (DGFDSRGKREFDRHSGS). Phosphoserine occurs at positions 197, 199, 203, 205, and 208. Residue K211 is modified to N6-acetyllysine; alternate. K211 is covalently cross-linked (Glycyl lysine isopeptide (Lys-Gly) (interchain with G-Cter in SUMO2); alternate). Position 216 is an omega-N-methylarginine (R216). Phosphoserine is present on S221. T226 is subject to Phosphothreonine. K228 participates in a covalent cross-link: Glycyl lysine isopeptide (Lys-Gly) (interchain with G-Cter in SUMO1); alternate. Residue K228 forms a Glycyl lysine isopeptide (Lys-Gly) (interchain with G-Cter in SUMO2); alternate linkage. S234 is subject to Phosphoserine. Over residues 242–256 (ISYNCSDLDQSNVTE) the composition is skewed to polar residues. Disordered stretches follow at residues 242–291 (ISYN…TLDE) and 327–407 (SKSE…PALA). Residues 261–274 (GEEHPVADTENKEN) are compositionally biased toward basic and acidic residues. K280 is covalently cross-linked (Glycyl lysine isopeptide (Lys-Gly) (interchain with G-Cter in SUMO1); alternate). A Glycyl lysine isopeptide (Lys-Gly) (interchain with G-Cter in SUMO2) cross-link involves residue K280. A Glycyl lysine isopeptide (Lys-Gly) (interchain with G-Cter in SUMO2); alternate cross-link involves residue K280. 2 stretches are compositionally biased toward basic and acidic residues: residues 281 to 291 (EEGPKEMTLDE) and 327 to 341 (SKSE…VMDH). Residue K328 is modified to N6-acetyllysine. S329 carries the post-translational modification Phosphoserine. Residues 362–371 (GRPGRGGRGG) are compositionally biased toward gly residues. An omega-N-methylarginine mark is found at R363, R366, and R369. Residues S391 and S393 each carry the phosphoserine modification.

It belongs to the SERBP1-HABP4 family. In terms of assembly, associates with mature 80S ribosomes. Interacts with EEF2/eEF2; interaction sequesters EEF2/eEF2 at the A-site of the ribosome, thereby blocking the interaction sites of the mRNA-tRNA complex, promoting ribosome stabilization and hibernation. Interacts with SPIN1. Interacts with CHD3 and TDRD3. Interacts with ZDHHC17 (via ANK repeats). Post-translationally, phosphorylation by MTOR inhibits SERBP1 and relieves ribosome hibernation.

Functionally, ribosome-binding protein that promotes ribosome hibernation, a process during which ribosomes are stabilized in an inactive state and preserved from proteasomal degradation. Acts via its association with EEF2/eEF2 factor, sequestering EEF2/eEF2 at the A-site of the ribosome and promoting ribosome stabilization and storage in an inactive state. May also play a role in the regulation of mRNA stability: binds to the 3'-most 134 nt of the SERPINE1/PAI1 mRNA, a region which confers cyclic nucleotide regulation of message decay. Seems to play a role in PML-nuclear bodies formation. This Oryctolagus cuniculus (Rabbit) protein is SERPINE1 mRNA-binding protein 1.